The primary structure comprises 232 residues: Ubiquinone biosynthesis O-methyltransferase (232 aa).

Residues Arg-36, Gly-55, Asp-76, and Met-120 each contribute to the S-adenosyl-L-methionine site.

The protein belongs to the methyltransferase superfamily. UbiG/COQ3 family.

It catalyses the reaction a 3-demethylubiquinol + S-adenosyl-L-methionine = a ubiquinol + S-adenosyl-L-homocysteine + H(+). The catalysed reaction is a 3-(all-trans-polyprenyl)benzene-1,2-diol + S-adenosyl-L-methionine = a 2-methoxy-6-(all-trans-polyprenyl)phenol + S-adenosyl-L-homocysteine + H(+). It functions in the pathway cofactor biosynthesis; ubiquinone biosynthesis. Functionally, O-methyltransferase that catalyzes the 2 O-methylation steps in the ubiquinone biosynthetic pathway. This is Ubiquinone biosynthesis O-methyltransferase from Paraburkholderia xenovorans (strain LB400).